Reading from the N-terminus, the 107-residue chain is Phosphoribosyl-ATP pyrophosphatase (107 aa).

It belongs to the PRA-PH family.

The protein localises to the cytoplasm. The catalysed reaction is 1-(5-phospho-beta-D-ribosyl)-ATP + H2O = 1-(5-phospho-beta-D-ribosyl)-5'-AMP + diphosphate + H(+). It functions in the pathway amino-acid biosynthesis; L-histidine biosynthesis; L-histidine from 5-phospho-alpha-D-ribose 1-diphosphate: step 2/9. This chain is Phosphoribosyl-ATP pyrophosphatase, found in Nitrobacter hamburgensis (strain DSM 10229 / NCIMB 13809 / X14).